The following is a 417-amino-acid chain: NADH-quinone oxidoreductase subunit D (417 aa).

This sequence belongs to the complex I 49 kDa subunit family. As to quaternary structure, NDH-1 is composed of 14 different subunits. Subunits NuoB, C, D, E, F, and G constitute the peripheral sector of the complex.

It localises to the cell inner membrane. It catalyses the reaction a quinone + NADH + 5 H(+)(in) = a quinol + NAD(+) + 4 H(+)(out). Its function is as follows. NDH-1 shuttles electrons from NADH, via FMN and iron-sulfur (Fe-S) centers, to quinones in the respiratory chain. The immediate electron acceptor for the enzyme in this species is believed to be ubiquinone. Couples the redox reaction to proton translocation (for every two electrons transferred, four hydrogen ions are translocated across the cytoplasmic membrane), and thus conserves the redox energy in a proton gradient. The polypeptide is NADH-quinone oxidoreductase subunit D (Leptothrix cholodnii (strain ATCC 51168 / LMG 8142 / SP-6) (Leptothrix discophora (strain SP-6))).